Reading from the N-terminus, the 908-residue chain is Protein translocase subunit SecA (908 aa).

ATP contacts are provided by residues Gln-87, Gly-105–Thr-109, and Asp-494. The disordered stretch occupies residues Gln-871–Arg-908. Positions Ser-874–Asn-884 are enriched in polar residues.

It belongs to the SecA family. As to quaternary structure, monomer and homodimer. Part of the essential Sec protein translocation apparatus which comprises SecA, SecYEG and auxiliary proteins SecDF. Other proteins may also be involved.

Its subcellular location is the cell inner membrane. It is found in the cytoplasm. It carries out the reaction ATP + H2O + cellular proteinSide 1 = ADP + phosphate + cellular proteinSide 2.. Functionally, part of the Sec protein translocase complex. Interacts with the SecYEG preprotein conducting channel. Has a central role in coupling the hydrolysis of ATP to the transfer of proteins into and across the cell membrane, serving as an ATP-driven molecular motor driving the stepwise translocation of polypeptide chains across the membrane. The chain is Protein translocase subunit SecA from Leptospira interrogans serogroup Icterohaemorrhagiae serovar Lai (strain 56601).